Here is a 253-residue protein sequence, read N- to C-terminus: Triosephosphate isomerase (253 aa).

9–11 (NWK) serves as a coordination point for substrate. H96 acts as the Electrophile in catalysis. E168 serves as the catalytic Proton acceptor. Substrate is bound by residues G174, S213, and 234 to 235 (GG).

Belongs to the triosephosphate isomerase family. Homodimer.

The protein localises to the cytoplasm. The catalysed reaction is D-glyceraldehyde 3-phosphate = dihydroxyacetone phosphate. Its pathway is carbohydrate biosynthesis; gluconeogenesis. The protein operates within carbohydrate degradation; glycolysis; D-glyceraldehyde 3-phosphate from glycerone phosphate: step 1/1. Involved in the gluconeogenesis. Catalyzes stereospecifically the conversion of dihydroxyacetone phosphate (DHAP) to D-glyceraldehyde-3-phosphate (G3P). The protein is Triosephosphate isomerase of Hydrogenovibrio crunogenus (strain DSM 25203 / XCL-2) (Thiomicrospira crunogena).